Consider the following 206-residue polypeptide: Ras-related protein RABG3f (206 aa).

15–23 (GDSGVGKTS) is a GTP binding site. The short motif at 37 to 45 (YKATIGADF) is the Effector region element. GTP contacts are provided by residues 63–67 (DTAGQ), 125–128 (NKVD), and 158–159 (SA). S-geranylgeranyl cysteine attachment occurs at residues Cys-204 and Cys-206. Residue Cys-206 is modified to Cysteine methyl ester.

This sequence belongs to the small GTPase superfamily. Rab family. As to quaternary structure, interacts with VPS35A.

Its subcellular location is the endosome membrane. The protein localises to the vacuole membrane. The protein resides in the prevacuolar compartment membrane. With respect to regulation, regulated by guanine nucleotide exchange factors (GEFs) which promote the exchange of bound GDP for free GTP. Regulated by the MON1-CCZ1 complex which serves as a link between Rab5 and Rab7 protein families in PVCs and mediates PVC maturation. Functionally, essential for trafficking from prevacuolar compartments to vacuoles. Involved in the trafficking of newly synthesized protein to vacuoles. Essential for plant growth. Participates in the recruitment of the core retromer components to the endosomal membrane by interacting with VPS35A. The polypeptide is Ras-related protein RABG3f (RABG3F) (Arabidopsis thaliana (Mouse-ear cress)).